The sequence spans 170 residues: DLTEAANKSNEALRLAKQESNDYRRQVQALTCEVDALKGTNESLERQMREMEENFAMESSSSQDKIVQLEEDTQNMKDEMAKHLHEYQDLLNVKMALDIEIATYRKLLEGEESRISTPLPNFSSFNLRETMLELKPNIESTFTKKVLIKTIETRDGQVLNESTQNHDDLE.

The span at 1–10 (DLTEAANKSN) shows a compositional bias: polar residues. The segment at 1 to 20 (DLTEAANKSNEALRLAKQES) is disordered. The tract at residues 1–111 (DLTEAANKSN…ATYRKLLEGE (111 aa)) is coil 2. An IF rod domain is found at 1 to 115 (DLTEAANKSN…KLLEGEESRI (115 aa)). The interval 112–170 (ESRISTPLPNFSSFNLRETMLELKPNIESTFTKKVLIKTIETRDGQVLNESTQNHDDLE) is tail.

Belongs to the intermediate filament family. In terms of assembly, homomer. One of the most prominent phosphoproteins in various cells of mesenchymal origin. Phosphorylation is enhanced during cell division, at which time vimentin filaments are significantly reorganized. In terms of tissue distribution, expressed in low amounts in retina, optic nerve, and brain and in higher amounts in spinal cord.

In terms of biological role, vimentins are class-III intermediate filaments found in various non-epithelial cells, especially mesenchymal cells. Vimentin is attached to the nucleus, endoplasmic reticulum, and mitochondria, either laterally or terminally. This is Vimentin A1 from Carassius auratus (Goldfish).